Consider the following 1349-residue polypeptide: Serine-aspartate repeat-containing protein D (1349 aa).

Residues 1–35 (MLNRENKTAITRKGMVSNRLNKFSIRKYTVGTASI) form the signal peptide. The YSIRK-G/S signaling motif motif lies at 23–34 (FSIRKYTVGTAS). Residues 36–568 (LVGTTLIFGL…NNQSGGAGQE (533 aa)) form a ligand binding A region region. The segment at 54-185 (ESTNKELNEA…NKKVDAKTES (132 aa)) is disordered. Composition is skewed to polar residues over residues 62–71 (EATTSASDNQ) and 94–108 (EMVS…SNGN). Basic and acidic residues predominate over residues 130 to 145 (KSDEQASPKSTNEDLN). 2 stretches are compositionally biased toward polar residues: residues 146-155 (TKQTISNQEA) and 163-173 (NKSVVNVQPTN). Over residues 174–183 (EENKKVDAKT) the composition is skewed to basic and acidic residues. 5 consecutive CNA-B domains span residues 569 to 680 (VYKI…IYKP), 681 to 791 (KYNL…YKTP), 792 to 901 (KYNL…FYKP), 902 to 1012 (TYNL…YKTP), and 1013 to 1123 (KYSL…EEDT). Disordered stretches follow at residues 856-883 (FETP…TSTT), 972-992 (YTPT…GLTT), and 1081-1325 (AGLT…SNNA). Composition is skewed to polar residues over residues 860–869 (SGYTPTQVGS) and 972–981 (YTPTSVTSGN). Composition is skewed to acidic residues over residues 1091 to 1101 (TEDDKDADGGE) and 1118 to 1288 (YFEE…DSDS). The short motif at 1312–1316 (LPETG) is the LPXTG sorting signal element. Position 1315 is a pentaglycyl murein peptidoglycan amidated threonine (Thr1315). A propeptide spans 1316–1349 (GSENNGSNNATLFGGLFAALGSLLLFGRRKKQNK) (removed by sortase).

Belongs to the serine-aspartate repeat-containing protein (SDr) family. In terms of assembly, interacts with host DSG1; this interaction increases S.aureus adherence to keratinocytes.

It is found in the secreted. The protein resides in the cell wall. Its function is as follows. Cell surface-associated calcium-binding protein which plays an important role in adhesion and pathogenesis. Mediates interactions with components of the extracellular matrix such as host DSG1 to promote bacterial adhesion to host cells. Contributes to the resistance to killing by innate immune components such as neutrophils present in blood and thus attenuates bacterial clearance. The sequence is that of Serine-aspartate repeat-containing protein D (sdrD) from Staphylococcus aureus (strain NCTC 8325 / PS 47).